The primary structure comprises 622 residues: E3 ubiquitin-protein ligase hrd-1 (622 aa).

A signal peptide spans 1-23 (MRVSAGLMIGGSCVATAATVLNA). Residues 24 to 41 (FVINKQFYPSIVYLSKSN) lie on the Lumenal side of the membrane. The chain crosses the membrane as a helical span at residues 42–62 (ASMAVLYFQGIVLVYLMFQLL). Residues 63–99 (KSILFGDLRAAEAEHLSERTWHAVLETCLAFTVFRDD) are Cytoplasmic-facing. A helical membrane pass occupies residues 100–120 (FSAMFVMQFIGLLFIKCFHWL). At 121-141 (ADDRVDMMERSPVITLRFHLR) the chain is on the lumenal side. The helical transmembrane segment at 142 to 162 (MMTVLAALGFADSYFVSSAYF) threads the bilayer. At 163–170 (STITKGAS) the chain is on the cytoplasmic side. Residues 171–191 (SQIVFGFEYAILLALVLHVTI) traverse the membrane as a helical segment. Residues 192–215 (KYLLHMHDLRNPQSWDNKAVYLLY) lie on the Lumenal side of the membrane. A helical transmembrane segment spans residues 216–236 (AELLINLIRCVLYGFFAVIML). Over 237 to 622 (RVHTFPLFSV…RFPPPNPEHE (386 aa)) the chain is Cytoplasmic. Residues 292 to 333 (CIICREEMTVESSPKRLPCSHVFHAHCLRSWFQRQQTCPTCR) form an RING-type; atypical zinc finger. The segment covering 436–445 (MPPPPIPQPN) has biased composition (pro residues). 2 disordered regions span residues 436-463 (MPPP…PNFD) and 514-622 (PVPT…PEHE). The segment covering 526-538 (ATASSVPTSVPSE) has biased composition (low complexity). The span at 562 to 577 (FNDTQSTSTPSTSAGP) shows a compositional bias: polar residues. The span at 579–596 (PSLTPSTSSVPSTSSVRT) shows a compositional bias: low complexity.

This sequence belongs to the HRD1 family. In terms of assembly, homodimer.

The protein localises to the endoplasmic reticulum membrane. It catalyses the reaction S-ubiquitinyl-[E2 ubiquitin-conjugating enzyme]-L-cysteine + [acceptor protein]-L-lysine = [E2 ubiquitin-conjugating enzyme]-L-cysteine + N(6)-ubiquitinyl-[acceptor protein]-L-lysine.. It participates in protein modification; protein ubiquitination. Its function is as follows. Acts as an E3 ubiquitin-protein ligase which accepts ubiquitin specifically from endoplasmic reticulum-associated ubc-7 E2 ligase and transfers it to substrates, promoting their degradation. Component of the endoplasmic reticulum quality control (ERQC) system, which is also called the ER-associated degradation (ERAD) system, involved in ubiquitin-dependent degradation of misfolded endoplasmic reticulum proteins. Also promotes the degradation of normal but naturally short-lived proteins. Protects cells from ER stress-induced apoptosis. Thought to play a role together with hsp-3 in developmental growth and function of intestinal cells and to play a role together with hsp-4 in gonad formation. This is E3 ubiquitin-protein ligase hrd-1 from Caenorhabditis briggsae.